Reading from the N-terminus, the 355-residue chain is DNA polymerase IV (355 aa).

A UmuC domain is found at 4–185 (IIHVDMDCFY…LPLKKIPGVG (182 aa)). Mg(2+) contacts are provided by Asp-8 and Asp-103. Residue Glu-104 is part of the active site.

It belongs to the DNA polymerase type-Y family. Monomer. The cofactor is Mg(2+).

Its subcellular location is the cytoplasm. It carries out the reaction DNA(n) + a 2'-deoxyribonucleoside 5'-triphosphate = DNA(n+1) + diphosphate. Functionally, poorly processive, error-prone DNA polymerase involved in untargeted mutagenesis. Copies undamaged DNA at stalled replication forks, which arise in vivo from mismatched or misaligned primer ends. These misaligned primers can be extended by PolIV. Exhibits no 3'-5' exonuclease (proofreading) activity. May be involved in translesional synthesis, in conjunction with the beta clamp from PolIII. This chain is DNA polymerase IV, found in Pasteurella multocida (strain Pm70).